The sequence spans 340 residues: tRNA N6-adenosine threonylcarbamoyltransferase (340 aa).

Fe cation-binding residues include His-111 and His-115. Substrate-binding positions include 134 to 138 (IISGA), Asp-167, Gly-180, and Asn-273. Asp-301 contributes to the Fe cation binding site.

The protein belongs to the KAE1 / TsaD family. Requires Fe(2+) as cofactor.

It localises to the cytoplasm. It carries out the reaction L-threonylcarbamoyladenylate + adenosine(37) in tRNA = N(6)-L-threonylcarbamoyladenosine(37) in tRNA + AMP + H(+). Its function is as follows. Required for the formation of a threonylcarbamoyl group on adenosine at position 37 (t(6)A37) in tRNAs that read codons beginning with adenine. Is involved in the transfer of the threonylcarbamoyl moiety of threonylcarbamoyl-AMP (TC-AMP) to the N6 group of A37, together with TsaE and TsaB. TsaD likely plays a direct catalytic role in this reaction. This Wigglesworthia glossinidia brevipalpis protein is tRNA N6-adenosine threonylcarbamoyltransferase.